A 356-amino-acid polypeptide reads, in one-letter code: Alanine racemase, catabolic (356 aa).

Lys-35 (proton acceptor; specific for D-alanine) is an active-site residue. Residue Lys-35 is modified to N6-(pyridoxal phosphate)lysine. Substrate is bound at residue Arg-130. Tyr-253 serves as the catalytic Proton acceptor; specific for L-alanine. A substrate-binding site is contributed by Met-301.

Belongs to the alanine racemase family. Pyridoxal 5'-phosphate serves as cofactor.

It carries out the reaction L-alanine = D-alanine. Functionally, isomerizes L-alanine to D-alanine which is then oxidized to pyruvate by DadA. The polypeptide is Alanine racemase, catabolic (dadX) (Salmonella typhi).